The sequence spans 644 residues: Phosphatidylinositol polyphosphate 5-phosphatase type IV (644 aa).

The interval 1-193 (MPSKAENLRP…RLPSLLPPRP (193 aa)) is disordered. Tandem repeats lie at residues 10–13 (PSEP), 15–18 (PQPP), 28–31 (PGAP), 39–42 (PPDV), 55–58 (PATP), 69–71 (PIA), 72–74 (PRP), and 75–78 (PARP). Positions 10 to 242 (PSEPAPQPPE…SLGPGRPRSP (233 aa)) are 13 X 4 AA repeats of P-X-X-P. Basic and acidic residues predominate over residues 78 to 90 (PRLERALSLDDKG). Phosphoserine is present on Ser-99. The segment covering 107–118 (NGTSPSRGSVQS) has biased composition (polar residues). Repeat unit 9 spans residues 121-124 (PGAP). A compositionally biased stretch (low complexity) spans 152–163 (GSPSSGGNPLSG). 4 consecutive repeat copies span residues 169–172 (PNLP), 183–185 (PRL), 190–193 (PPRP), and 236–239 (PGRP). Phosphoserine is present on residues Ser-241 and Ser-256. A Cysteine methyl ester modification is found at Cys-641. The S-farnesyl cysteine moiety is linked to residue Cys-641. A propeptide spans 642-644 (SVS) (removed in mature form).

Belongs to the inositol polyphosphate 5-phosphatase family. As to quaternary structure, interacts (when prenylated) with PDE6D; this is important for normal location in cilia.

The protein localises to the cytoplasm. It localises to the cytoskeleton. The protein resides in the cilium axoneme. It is found in the golgi apparatus. Its subcellular location is the golgi stack membrane. The protein localises to the cell membrane. It localises to the cell projection. The protein resides in the ruffle. It is found in the nucleus. The enzyme catalyses a 1,2-diacyl-sn-glycero-3-phospho-(1D-myo-inositol-4,5-bisphosphate) + H2O = a 1,2-diacyl-sn-glycero-3-phospho-(1D-myo-inositol 4-phosphate) + phosphate. It catalyses the reaction a 1,2-diacyl-sn-glycero-3-phospho-(1D-myo-inositol-3,4,5-trisphosphate) + H2O = a 1,2-diacyl-sn-glycero-3-phospho-(1D-myo-inositol-3,4-bisphosphate) + phosphate. It carries out the reaction a 1,2-diacyl-sn-glycero-3-phospho-(1D-myo-inositol-3,5-bisphosphate) + H2O = a 1,2-diacyl-sn-glycero-3-phospho-(1D-myo-inositol-3-phosphate) + phosphate. Its function is as follows. Phosphatidylinositol (PtdIns) phosphatase that specifically hydrolyzes the 5-phosphate of phosphatidylinositol-3,4,5-trisphosphate (PtdIns(3,4,5)P3), phosphatidylinositol 4,5-bisphosphate(PtdIns(4,5)P2) and phosphatidylinositol 3,5-bisphosphate (PtdIns(3,5)P2). Specific for lipid substrates, inactive towards water soluble inositol phosphates. Plays an essential role in the primary cilium by controlling ciliary growth and phosphoinositide 3-kinase (PI3K) signaling and stability. This is Phosphatidylinositol polyphosphate 5-phosphatase type IV (INPP5E) from Pan troglodytes (Chimpanzee).